A 254-amino-acid chain; its full sequence is tRNA (guanine-N(7)-)-methyltransferase (254 aa).

The interval M1–G34 is disordered. Positions 87, 112, 139, and 162 each coordinate S-adenosyl-L-methionine. Residue D162 is part of the active site. Residues K166, D198, and T233–E236 contribute to the substrate site.

This sequence belongs to the class I-like SAM-binding methyltransferase superfamily. TrmB family.

It catalyses the reaction guanosine(46) in tRNA + S-adenosyl-L-methionine = N(7)-methylguanosine(46) in tRNA + S-adenosyl-L-homocysteine. Its pathway is tRNA modification; N(7)-methylguanine-tRNA biosynthesis. Functionally, catalyzes the formation of N(7)-methylguanine at position 46 (m7G46) in tRNA. The polypeptide is tRNA (guanine-N(7)-)-methyltransferase (Bordetella bronchiseptica (strain ATCC BAA-588 / NCTC 13252 / RB50) (Alcaligenes bronchisepticus)).